We begin with the raw amino-acid sequence, 101 residues long: MDKSKRPFLKSKRSFRRRLPPIQSGDRIDYRNMSLISRFISEQGKILSRRVNRLTLKQQRLITIAIKQARILSSLPFLNNEKQFERTESTARTTGLRTRNK.

The protein belongs to the bacterial ribosomal protein bS18 family. In terms of assembly, part of the 30S ribosomal subunit.

It is found in the plastid. Its subcellular location is the chloroplast. In Vitis vinifera (Grape), this protein is Small ribosomal subunit protein bS18c.